Consider the following 1005-residue polypeptide: DNA-directed RNA polymerase subunit beta (1005 aa).

This sequence belongs to the RNA polymerase beta chain family. As to quaternary structure, in plastids the minimal PEP RNA polymerase catalytic core is composed of four subunits: alpha, beta, beta', and beta''. When a (nuclear-encoded) sigma factor is associated with the core the holoenzyme is formed, which can initiate transcription (Potential).

It localises to the plastid. The protein resides in the apicoplast. It carries out the reaction RNA(n) + a ribonucleoside 5'-triphosphate = RNA(n+1) + diphosphate. Its function is as follows. DNA-dependent RNA polymerase catalyzes the transcription of DNA into RNA using the four ribonucleoside triphosphates as substrates. This is DNA-directed RNA polymerase subunit beta (rpoB) from Theileria parva (East coast fever infection agent).